The primary structure comprises 461 residues: Glycerol-3-phosphate acyltransferase, chloroplastic (461 aa).

A chloroplast-targeting transit peptide spans 1–96 (MSMTGSSAYY…SPPNMSASVS (96 aa)). Low complexity predominate over residues 47-76 (LLSSTSSSSSSSISLRSSTAPSPSCSSVTP). The segment at 47–88 (LLSSTSSSSSSSISLRSSTAPSPSCSSVTPKDNCLASAKHSP) is disordered. Positions 231–236 (HQTEAD) match the HXXXXD motif motif.

The protein belongs to the GPAT/DAPAT family.

It is found in the plastid. The protein resides in the chloroplast stroma. The enzyme catalyses sn-glycerol 3-phosphate + an acyl-CoA = a 1-acyl-sn-glycero-3-phosphate + CoA. It functions in the pathway phospholipid metabolism; CDP-diacylglycerol biosynthesis; CDP-diacylglycerol from sn-glycerol 3-phosphate: step 1/3. In terms of biological role, esterifies acyl-group from acyl-ACP to the sn-1 position of glycerol-3-phosphate. The enzyme from chilling-resistant plants discriminates against non-fluid palmitic acid and selects oleic acid whereas the enzyme from sensitive plants accepts both fatty acids. The protein is Glycerol-3-phosphate acyltransferase, chloroplastic (PLSB) of Phaseolus vulgaris (Kidney bean).